The sequence spans 498 residues: ATP synthase subunit beta, chloroplastic (498 aa).

Residue 172 to 179 (GGAGVGKT) coordinates ATP.

The protein belongs to the ATPase alpha/beta chains family. F-type ATPases have 2 components, CF(1) - the catalytic core - and CF(0) - the membrane proton channel. CF(1) has five subunits: alpha(3), beta(3), gamma(1), delta(1), epsilon(1). CF(0) has four main subunits: a(1), b(1), b'(1) and c(9-12).

The protein resides in the plastid. Its subcellular location is the chloroplast thylakoid membrane. It carries out the reaction ATP + H2O + 4 H(+)(in) = ADP + phosphate + 5 H(+)(out). Functionally, produces ATP from ADP in the presence of a proton gradient across the membrane. The catalytic sites are hosted primarily by the beta subunits. This is ATP synthase subunit beta, chloroplastic from Gossypium barbadense (Sea Island cotton).